Reading from the N-terminus, the 180-residue chain is Large ribosomal subunit protein uL5 (180 aa).

It belongs to the universal ribosomal protein uL5 family. As to quaternary structure, part of the 50S ribosomal subunit; part of the 5S rRNA/L5/L18/L25 subcomplex. Contacts the 5S rRNA and the P site tRNA. Forms a bridge to the 30S subunit in the 70S ribosome.

Functionally, this is one of the proteins that bind and probably mediate the attachment of the 5S RNA into the large ribosomal subunit, where it forms part of the central protuberance. In the 70S ribosome it contacts protein S13 of the 30S subunit (bridge B1b), connecting the 2 subunits; this bridge is implicated in subunit movement. Contacts the P site tRNA; the 5S rRNA and some of its associated proteins might help stabilize positioning of ribosome-bound tRNAs. The sequence is that of Large ribosomal subunit protein uL5 from Pediococcus pentosaceus (strain ATCC 25745 / CCUG 21536 / LMG 10740 / 183-1w).